Reading from the N-terminus, the 361-residue chain is Nicotinate-nucleotide--dimethylbenzimidazole phosphoribosyltransferase (361 aa).

Glutamate 314 (proton acceptor) is an active-site residue.

This sequence belongs to the CobT family.

The catalysed reaction is 5,6-dimethylbenzimidazole + nicotinate beta-D-ribonucleotide = alpha-ribazole 5'-phosphate + nicotinate + H(+). It participates in nucleoside biosynthesis; alpha-ribazole biosynthesis; alpha-ribazole from 5,6-dimethylbenzimidazole: step 1/2. In terms of biological role, catalyzes the synthesis of alpha-ribazole-5'-phosphate from nicotinate mononucleotide (NAMN) and 5,6-dimethylbenzimidazole (DMB). The polypeptide is Nicotinate-nucleotide--dimethylbenzimidazole phosphoribosyltransferase (Mycobacterium bovis (strain BCG / Pasteur 1173P2)).